We begin with the raw amino-acid sequence, 954 residues long: Valine--tRNA ligase (954 aa).

Residues 48-58 (PNVTGSLHMGH) carry the 'HIGH' region motif. Positions 560-564 (KMSKS) match the 'KMSKS' region motif. Lysine 563 provides a ligand contact to ATP. The stretch at 883–954 (AGFINKEAEL…QTQYQAIENL (72 aa)) forms a coiled coil.

This sequence belongs to the class-I aminoacyl-tRNA synthetase family. ValS type 1 subfamily. In terms of assembly, monomer.

It localises to the cytoplasm. It catalyses the reaction tRNA(Val) + L-valine + ATP = L-valyl-tRNA(Val) + AMP + diphosphate. Catalyzes the attachment of valine to tRNA(Val). As ValRS can inadvertently accommodate and process structurally similar amino acids such as threonine, to avoid such errors, it has a 'posttransfer' editing activity that hydrolyzes mischarged Thr-tRNA(Val) in a tRNA-dependent manner. This Actinobacillus pleuropneumoniae serotype 5b (strain L20) protein is Valine--tRNA ligase.